A 308-amino-acid polypeptide reads, in one-letter code: Methionyl-tRNA formyltransferase (308 aa).

110 to 113 lines the (6S)-5,6,7,8-tetrahydrofolate pocket; it reads SLLP.

It belongs to the Fmt family.

The catalysed reaction is L-methionyl-tRNA(fMet) + (6R)-10-formyltetrahydrofolate = N-formyl-L-methionyl-tRNA(fMet) + (6S)-5,6,7,8-tetrahydrofolate + H(+). Attaches a formyl group to the free amino group of methionyl-tRNA(fMet). The formyl group appears to play a dual role in the initiator identity of N-formylmethionyl-tRNA by promoting its recognition by IF2 and preventing the misappropriation of this tRNA by the elongation apparatus. The polypeptide is Methionyl-tRNA formyltransferase (Neisseria meningitidis serogroup C / serotype 2a (strain ATCC 700532 / DSM 15464 / FAM18)).